We begin with the raw amino-acid sequence, 207 residues long: High frequency lysogenization protein HflD homolog (207 aa).

This sequence belongs to the HflD family.

Its subcellular location is the cytoplasm. It localises to the cell inner membrane. The chain is High frequency lysogenization protein HflD homolog from Pseudomonas fluorescens (strain SBW25).